The primary structure comprises 346 residues: Protein STAR1 (346 aa).

The tract at residues 23–48 (QRPPPNGTVHACSKSRPPQLEPGKVG) is disordered. An ABC transporter domain is found at 112 to 344 (IRVRGLTRRS…KHPMARRFLE (233 aa)). 146 to 153 (GPSGSGKS) lines the ATP pocket.

This sequence belongs to the ABC transporter superfamily. ABCI family. As to quaternary structure, interacts with STAR2. In terms of tissue distribution, expressed in roots.

It localises to the membrane. Associates with STAR2 to form a functional transmembrane ABC transporter required for detoxification of aluminum (Al) in roots. Can specifically transport UDP-glucose. This Oryza sativa subsp. japonica (Rice) protein is Protein STAR1.